The chain runs to 273 residues: Inositol monophosphatase 1 (273 aa).

4 residues coordinate Mg(2+): glutamate 71, aspartate 91, valine 93, and aspartate 94. Glutamate 71 contacts substrate. Residues 93 to 96 (VDGT), 194 to 196 (GSC), and aspartate 221 each bind substrate. Aspartate 221 is a Mg(2+) binding site.

This sequence belongs to the inositol monophosphatase superfamily. The cofactor is Mg(2+). As to expression, expressed in seedlings, flowers, young and matures green fruits. Detected in roots and stems.

The enzyme catalyses a myo-inositol phosphate + H2O = myo-inositol + phosphate. It participates in polyol metabolism; myo-inositol biosynthesis; myo-inositol from D-glucose 6-phosphate: step 2/2. Responsible for the provision of inositol required for synthesis of phosphatidylinositol and polyphosphoinositides. The chain is Inositol monophosphatase 1 (IMP1) from Solanum lycopersicum (Tomato).